Reading from the N-terminus, the 1003-residue chain is Cation-transporting ATPase HMA5 (1003 aa).

Residues 6 to 25 (LSAVAGGGRPAAAGGGGDEM) form a disordered region. Gly residues predominate over residues 10–22 (AGGGRPAAAGGGG). HMA domains lie at 51–117 (EEAH…FDAE), 133–199 (LSAQ…FEAA), and 207–273 (DKIL…NGRL). Cu cation contacts are provided by cysteine 62, cysteine 65, cysteine 144, and cysteine 147. The next 8 helical transmembrane spans lie at 302 to 322 (SLFL…IPFI), 331 to 351 (GPFH…QFVV), 372 to 392 (VLVV…LLYG), 396 to 416 (GFHP…VLFG), 562 to 582 (IFVP…FLCG), 599 to 619 (FVFS…CALG), 938 to 958 (FFAM…LFPF), and 966 to 986 (WLAG…SLLL).

The protein belongs to the cation transport ATPase (P-type) (TC 3.A.3) family. Type IB subfamily. As to expression, expressed in root vascular cylinder, vascular bundles and mesophyll cells of leaf blades, and anther walls and microspores of stamens.

Its subcellular location is the cell membrane. Its function is as follows. Metal efflux transporter that may play a role in detoxification of heavy metals, such as zinc, copper, lead and cadmium, especially in the shoots. The sequence is that of Cation-transporting ATPase HMA5 from Oryza sativa subsp. japonica (Rice).